A 116-amino-acid polypeptide reads, in one-letter code: MNAAVETPEILVFTDNAANKVRELIDEEGNPALKLRVFVTGGGCSGFQYGFTFDEEVNEDDTAFEKNGVTLLIDPMSYQYLVGAEIDYTEGLEGSQFVIRNPNATSTCGCGSSFSA.

Iron-sulfur cluster-binding residues include cysteine 44, cysteine 108, and cysteine 110.

It belongs to the HesB/IscA family. As to quaternary structure, homodimer. Iron-sulfur cluster serves as cofactor.

Required for insertion of 4Fe-4S clusters. The sequence is that of Putative iron-sulfur cluster insertion protein ErpA from Azoarcus sp. (strain BH72).